We begin with the raw amino-acid sequence, 497 residues long: Transcription termination/antitermination protein NusA (497 aa).

One can recognise an S1 motif domain in the interval 135–200 (GKILTGIVKK…RGAQLFVTRS (66 aa)). One can recognise a KH domain in the interval 302-372 (RHTIDIAVDS…LKIDQKISNI (71 aa)). 2 repeat units span residues 364-414 (KIDQ…KKAL) and 439-489 (GMNQ…RNIC). The tract at residues 364 to 489 (KIDQKISNIL…MLIMAARNIC (126 aa)) is 2 X 51 AA approximate repeats.

It belongs to the NusA family. In terms of assembly, monomer. Binds directly to the core enzyme of the DNA-dependent RNA polymerase and to nascent RNA.

The protein resides in the cytoplasm. Its function is as follows. Participates in both transcription termination and antitermination. This Buchnera aphidicola subsp. Baizongia pistaciae (strain Bp) protein is Transcription termination/antitermination protein NusA.